The following is a 1872-amino-acid chain: Chitin synthase 6 (1872 aa).

Positions 1–23 (MAQHLPPVGGNGGAHTQPSLPAL) are disordered. The Myosin motor domain occupies 1-779 (MAQHLPPVGG…CWMEIAQLSD (779 aa)). 104-111 (GESGSGKT) contacts ATP. Residues asparagine 123, asparagine 291, asparagine 428, and asparagine 559 are each glycosylated (N-linked (GlcNAc...) asparagine). The disordered stretch occupies residues 587–652 (VMQASVSSKP…VNKPSEEGAS (66 aa)). The tract at residues 659–683 (LDNVTKSFHAQNTNAYFVFCLKPND) is actin-binding. Residue asparagine 661 is glycosylated (N-linked (GlcNAc...) asparagine). The next 2 helical transmembrane spans lie at 881-901 (WVFI…QHLG) and 920-940 (FIIW…PMLV). The Cytochrome b5 heme-binding domain occupies 944–1003 (QYVFTGEELSAYNGKDGKASYAAIRGQVFDIGSFIPRHPLPYLPSKLFTQYAGTDITGLF). N-linked (GlcNAc...) asparagine glycosylation is found at asparagine 1030, asparagine 1055, and asparagine 1120. A helical transmembrane segment spans residues 1193–1213 (FILAVTIILCSIIAFKFLAAL). Asparagine 1450 and asparagine 1556 each carry an N-linked (GlcNAc...) asparagine glycan. A run of 3 helical transmembrane segments spans residues 1581–1601 (FIVF…AYIV), 1614–1634 (VPVL…IIFI), and 1641–1661 (MIAW…GLPL). In terms of domain architecture, DEK-C spans 1814–1869 (LPSDDALLAEIREILRTADLMTVTKKGVKQELERRFGVNLDSRRAYINSATEALLS).

Belongs to the chitin synthase family. Class V subfamily.

It localises to the cell membrane. It catalyses the reaction [(1-&gt;4)-N-acetyl-beta-D-glucosaminyl](n) + UDP-N-acetyl-alpha-D-glucosamine = [(1-&gt;4)-N-acetyl-beta-D-glucosaminyl](n+1) + UDP + H(+). Functionally, polymerizes chitin, a structural polymer of the cell wall and septum, by transferring the sugar moiety of UDP-GlcNAc to the non-reducing end of the growing chitin polymer. Required for appressorium penetration and invasive growth. This chain is Chitin synthase 6, found in Pyricularia oryzae (strain 70-15 / ATCC MYA-4617 / FGSC 8958) (Rice blast fungus).